A 143-amino-acid polypeptide reads, in one-letter code: Large ribosomal subunit protein uL11 (143 aa).

Belongs to the universal ribosomal protein uL11 family. As to quaternary structure, part of the ribosomal stalk of the 50S ribosomal subunit. Interacts with L10 and the large rRNA to form the base of the stalk. L10 forms an elongated spine to which L12 dimers bind in a sequential fashion forming a multimeric L10(L12)X complex. One or more lysine residues are methylated.

Forms part of the ribosomal stalk which helps the ribosome interact with GTP-bound translation factors. This Chromobacterium violaceum (strain ATCC 12472 / DSM 30191 / JCM 1249 / CCUG 213 / NBRC 12614 / NCIMB 9131 / NCTC 9757 / MK) protein is Large ribosomal subunit protein uL11.